A 187-amino-acid polypeptide reads, in one-letter code: Inner membrane-spanning protein YciB (187 aa).

The next 5 helical transmembrane spans lie at 22–42 (IYVA…VTYA), 50–70 (MQLI…FFHD), 80–100 (IIYV…KSVV), 118–138 (INWA…YIAY), and 148–168 (FKVF…GVYI).

Belongs to the YciB family.

It is found in the cell inner membrane. Its function is as follows. Plays a role in cell envelope biogenesis, maintenance of cell envelope integrity and membrane homeostasis. This Vibrio parahaemolyticus serotype O3:K6 (strain RIMD 2210633) protein is Inner membrane-spanning protein YciB.